The sequence spans 137 residues: Small heat shock protein IbpA (137 aa).

A sHSP domain is found at 28–137 (NQSNGGYPPY…SLKPRRIEIK (110 aa)).

It belongs to the small heat shock protein (HSP20) family. Monomer. Forms homomultimers of about 100-150 subunits at optimal growth temperatures. Conformation changes to monomers at high temperatures or high ionic concentrations.

It localises to the cytoplasm. Functionally, associates with aggregated proteins, together with IbpB, to stabilize and protect them from irreversible denaturation and extensive proteolysis during heat shock and oxidative stress. Aggregated proteins bound to the IbpAB complex are more efficiently refolded and reactivated by the ATP-dependent chaperone systems ClpB and DnaK/DnaJ/GrpE. Its activity is ATP-independent. The chain is Small heat shock protein IbpA from Yersinia pseudotuberculosis serotype O:1b (strain IP 31758).